Here is a 199-residue protein sequence, read N- to C-terminus: ATP-dependent Clp protease proteolytic subunit (199 aa).

Ser-103 serves as the catalytic Nucleophile. His-128 is an active-site residue.

It belongs to the peptidase S14 family. In terms of assembly, fourteen ClpP subunits assemble into 2 heptameric rings which stack back to back to give a disk-like structure with a central cavity, resembling the structure of eukaryotic proteasomes.

It localises to the cytoplasm. It carries out the reaction Hydrolysis of proteins to small peptides in the presence of ATP and magnesium. alpha-casein is the usual test substrate. In the absence of ATP, only oligopeptides shorter than five residues are hydrolyzed (such as succinyl-Leu-Tyr-|-NHMec, and Leu-Tyr-Leu-|-Tyr-Trp, in which cleavage of the -Tyr-|-Leu- and -Tyr-|-Trp bonds also occurs).. Its function is as follows. Cleaves peptides in various proteins in a process that requires ATP hydrolysis. Has a chymotrypsin-like activity. Plays a major role in the degradation of misfolded proteins. The sequence is that of ATP-dependent Clp protease proteolytic subunit from Photobacterium profundum (strain SS9).